A 356-amino-acid polypeptide reads, in one-letter code: Heparan sulfate 2-O-sulfotransferase 1 (356 aa).

Topologically, residues 1–11 (MGLLRIMMPPK) are cytoplasmic. The helical; Signal-anchor for type II membrane protein transmembrane segment at 12–28 (LQLLAVVAFAVAMLFLE) threads the bilayer. The stretch at 24–51 (MLFLENQIQKLEESRAKLERAIARHEVR) forms a coiled coil. The Lumenal segment spans residues 29–356 (NQIQKLEESR…FYEKIYPKSN (328 aa)). Lysine 83, threonine 84, alanine 85, serine 86, threonine 87, and serine 88 together coordinate adenosine 3',5'-bisphosphate. N-linked (GlcNAc...) asparagine glycans are attached at residues asparagine 108 and asparagine 127. Catalysis depends on residues histidine 140 and histidine 142. Residues arginine 164 and serine 172 each contribute to the adenosine 3',5'-bisphosphate site. 2 disulfides stabilise this stretch: cysteine 201–cysteine 209 and cysteine 222–cysteine 228. The adenosine 3',5'-bisphosphate site is built by tyrosine 279, serine 285, threonine 290, and lysine 293.

The protein belongs to the sulfotransferase 3 family. As to quaternary structure, homotrimer. Interacts with the C5-epimerase GLCE. Post-translationally, N-glycosylated. Widely expressed. Expressed at higher level in lung and brain. Weakly expressed in spleen.

The protein resides in the golgi apparatus membrane. In terms of biological role, catalyzes the transfer of a sulfo group from 3'-phospho-5'-adenylyl sulfate (PAPS) to the 2-OH position of iduronic acid (IdoA) or glucuronic acid (GlcA) within the heparan sulfate (HS) chain and participates in HS biosynthesis. Required for metanephric development of kidney formation, suggesting that 2-O-sulfation within HS is essential for signaling between ureteric bud and metanephric mesenchyme. The polypeptide is Heparan sulfate 2-O-sulfotransferase 1 (Mus musculus (Mouse)).